A 443-amino-acid chain; its full sequence is Protoheme IX farnesyltransferase, mitochondrial (443 aa).

The next 7 helical transmembrane spans lie at 174-194 (AAGF…LTSV), 235-255 (LAVS…TLGV), 257-277 (PLTG…YTPL), 280-300 (ISIA…VMGW), 309-329 (AGAF…FNAL), 364-384 (LLVL…FPIM), and 411-431 (LFFC…TCKR).

Belongs to the UbiA prenyltransferase family.

It is found in the mitochondrion membrane. It catalyses the reaction heme b + (2E,6E)-farnesyl diphosphate + H2O = Fe(II)-heme o + diphosphate. Functionally, converts protoheme IX and farnesyl diphosphate to heme O. The sequence is that of Protoheme IX farnesyltransferase, mitochondrial (COX10) from Pongo abelii (Sumatran orangutan).